Reading from the N-terminus, the 225-residue chain is NAD(P)H-quinone oxidoreductase subunit K, chloroplastic (225 aa).

4 residues coordinate [4Fe-4S] cluster: Cys43, Cys44, Cys108, and Cys139.

Belongs to the complex I 20 kDa subunit family. NDH is composed of at least 16 different subunits, 5 of which are encoded in the nucleus. It depends on [4Fe-4S] cluster as a cofactor.

Its subcellular location is the plastid. The protein resides in the chloroplast thylakoid membrane. The catalysed reaction is a plastoquinone + NADH + (n+1) H(+)(in) = a plastoquinol + NAD(+) + n H(+)(out). The enzyme catalyses a plastoquinone + NADPH + (n+1) H(+)(in) = a plastoquinol + NADP(+) + n H(+)(out). Its function is as follows. NDH shuttles electrons from NAD(P)H:plastoquinone, via FMN and iron-sulfur (Fe-S) centers, to quinones in the photosynthetic chain and possibly in a chloroplast respiratory chain. The immediate electron acceptor for the enzyme in this species is believed to be plastoquinone. Couples the redox reaction to proton translocation, and thus conserves the redox energy in a proton gradient. This Solanum bulbocastanum (Wild potato) protein is NAD(P)H-quinone oxidoreductase subunit K, chloroplastic.